Here is a 152-residue protein sequence, read N- to C-terminus: Small ribosomal subunit protein uS9 (152 aa).

The protein belongs to the universal ribosomal protein uS9 family.

The chain is Small ribosomal subunit protein uS9 from Mycobacterium ulcerans (strain Agy99).